A 594-amino-acid polypeptide reads, in one-letter code: A-type ATP synthase subunit A (594 aa).

ATP is bound at residue 236–243; it reads GPFGSGKT.

This sequence belongs to the ATPase alpha/beta chains family. As to quaternary structure, has multiple subunits with at least A(3), B(3), C, D, E, F, H, I and proteolipid K(x).

It is found in the cell membrane. It catalyses the reaction ATP + H2O + 4 H(+)(in) = ADP + phosphate + 5 H(+)(out). In terms of biological role, component of the A-type ATP synthase that produces ATP from ADP in the presence of a proton gradient across the membrane. The A chain is the catalytic subunit. The protein is A-type ATP synthase subunit A of Pyrobaculum neutrophilum (strain DSM 2338 / JCM 9278 / NBRC 100436 / V24Sta) (Thermoproteus neutrophilus).